A 432-amino-acid chain; its full sequence is Homogentisate 1,2-dioxygenase (432 aa).

Residue H287 is the Proton acceptor of the active site. 2 residues coordinate Fe cation: H330 and E336. Positions 345 and 366 each coordinate homogentisate. H366 contacts Fe cation.

Belongs to the homogentisate dioxygenase family. Hexamer; dimer of trimers. Fe cation serves as cofactor.

The enzyme catalyses homogentisate + O2 = 4-maleylacetoacetate + H(+). The protein operates within amino-acid degradation; L-phenylalanine degradation; acetoacetate and fumarate from L-phenylalanine: step 4/6. In terms of biological role, involved in the catabolism of homogentisate (2,5-dihydroxyphenylacetate or 2,5-OH-PhAc), a central intermediate in the degradation of phenylalanine and tyrosine. Catalyzes the oxidative ring cleavage of the aromatic ring of homogentisate to yield maleylacetoacetate. This chain is Homogentisate 1,2-dioxygenase, found in Pseudomonas aeruginosa (strain UCBPP-PA14).